Reading from the N-terminus, the 204-residue chain is Thiamine-phosphate synthase (204 aa).

4-amino-2-methyl-5-(diphosphooxymethyl)pyrimidine contacts are provided by residues 34–38 and aspartate 66; that span reads QYRDK. Mg(2+) contacts are provided by aspartate 67 and aspartate 86. Serine 104 is a binding site for 4-amino-2-methyl-5-(diphosphooxymethyl)pyrimidine. Residue 131–133 participates in 2-[(2R,5Z)-2-carboxy-4-methylthiazol-5(2H)-ylidene]ethyl phosphate binding; it reads TST. A 4-amino-2-methyl-5-(diphosphooxymethyl)pyrimidine-binding site is contributed by lysine 134. 2-[(2R,5Z)-2-carboxy-4-methylthiazol-5(2H)-ylidene]ethyl phosphate-binding positions include glycine 160 and 180-181; that span reads VS.

This sequence belongs to the thiamine-phosphate synthase family. The cofactor is Mg(2+).

It carries out the reaction 2-[(2R,5Z)-2-carboxy-4-methylthiazol-5(2H)-ylidene]ethyl phosphate + 4-amino-2-methyl-5-(diphosphooxymethyl)pyrimidine + 2 H(+) = thiamine phosphate + CO2 + diphosphate. The catalysed reaction is 2-(2-carboxy-4-methylthiazol-5-yl)ethyl phosphate + 4-amino-2-methyl-5-(diphosphooxymethyl)pyrimidine + 2 H(+) = thiamine phosphate + CO2 + diphosphate. The enzyme catalyses 4-methyl-5-(2-phosphooxyethyl)-thiazole + 4-amino-2-methyl-5-(diphosphooxymethyl)pyrimidine + H(+) = thiamine phosphate + diphosphate. The protein operates within cofactor biosynthesis; thiamine diphosphate biosynthesis; thiamine phosphate from 4-amino-2-methyl-5-diphosphomethylpyrimidine and 4-methyl-5-(2-phosphoethyl)-thiazole: step 1/1. Functionally, condenses 4-methyl-5-(beta-hydroxyethyl)thiazole monophosphate (THZ-P) and 2-methyl-4-amino-5-hydroxymethyl pyrimidine pyrophosphate (HMP-PP) to form thiamine monophosphate (TMP). The polypeptide is Thiamine-phosphate synthase (Picrophilus torridus (strain ATCC 700027 / DSM 9790 / JCM 10055 / NBRC 100828 / KAW 2/3)).